Reading from the N-terminus, the 231-residue chain is UPF0758 protein aq_1610 (231 aa).

The region spanning 110–231 (SIRNPQEAFE…YFSFREEGVL (122 aa)) is the MPN domain. His180, His182, and Asp193 together coordinate Zn(2+). The JAMM motif motif lies at 180 to 193 (HNHPQGEPSPSNED).

This sequence belongs to the UPF0758 family.

The chain is UPF0758 protein aq_1610 from Aquifex aeolicus (strain VF5).